The sequence spans 145 residues: D-aminoacyl-tRNA deacylase (145 aa).

The Gly-cisPro motif, important for rejection of L-amino acids signature appears at 137 to 138 (GP).

It belongs to the DTD family. As to quaternary structure, homodimer.

The protein resides in the cytoplasm. The enzyme catalyses glycyl-tRNA(Ala) + H2O = tRNA(Ala) + glycine + H(+). The catalysed reaction is a D-aminoacyl-tRNA + H2O = a tRNA + a D-alpha-amino acid + H(+). Its function is as follows. An aminoacyl-tRNA editing enzyme that deacylates mischarged D-aminoacyl-tRNAs. Also deacylates mischarged glycyl-tRNA(Ala), protecting cells against glycine mischarging by AlaRS. Acts via tRNA-based rather than protein-based catalysis; rejects L-amino acids rather than detecting D-amino acids in the active site. By recycling D-aminoacyl-tRNA to D-amino acids and free tRNA molecules, this enzyme counteracts the toxicity associated with the formation of D-aminoacyl-tRNA entities in vivo and helps enforce protein L-homochirality. In Chromohalobacter salexigens (strain ATCC BAA-138 / DSM 3043 / CIP 106854 / NCIMB 13768 / 1H11), this protein is D-aminoacyl-tRNA deacylase.